A 1054-amino-acid polypeptide reads, in one-letter code: DIS3-like exonuclease 1 (1054 aa).

In terms of domain architecture, CSD1 spans 236 to 313; sequence AGIKSGRYIQ…WKGRTAALCE (78 aa). Residues 313-332 form a disordered region; that stretch reads ENDSEDKASGESPSEPMPTG. The CSD2 domain maps to 365-431; it reads ILVTPWDYRI…GEIATILVEN (67 aa). An RNB domain is found at 465–816; that stretch reads RRDLRSTHLV…VHRLLMAAIS (352 aa). The residue at position 989 (S989) is a Phosphoserine.

This sequence belongs to the RNR ribonuclease family. As to quaternary structure, component of the RNA exosome complex. The catalytically inactive RNA exosome core (Exo-9) complex is believed to associate with catalytic subunits EXOSC10, and DIS3 or DIS3L in cytoplasmic- and nuclear-specific RNA exosome complex forms. It depends on Mg(2+) as a cofactor.

It localises to the cytoplasm. It carries out the reaction Exonucleolytic cleavage in the 3'- to 5'-direction to yield nucleoside 5'-phosphates.. Its function is as follows. Catalytic component of the RNA exosome complex which has 3'-&gt;5' exoribonuclease activity and participates in a multitude of cellular RNA processing and degradation events. In the cytoplasm, the RNA exosome complex is involved in general mRNA turnover and specifically degrades inherently unstable mRNAs containing AU-rich elements (AREs) within their 3' untranslated regions, and in RNA surveillance pathways, preventing translation of aberrant mRNAs. It seems to be involved in degradation of histone mRNA. This Rattus norvegicus (Rat) protein is DIS3-like exonuclease 1 (Dis3l).